The chain runs to 81 residues: Defensin-like protein 130 (81 aa).

The N-terminal stretch at 1–21 (MTKNTSLTIFMVVLVIGMLYT) is a signal peptide. Cystine bridges form between C32/C81, C41/C63, C46/C75, and C50/C77.

This sequence belongs to the DEFL family.

It localises to the secreted. In Arabidopsis thaliana (Mouse-ear cress), this protein is Defensin-like protein 130 (LCR28).